A 205-amino-acid chain; its full sequence is ATP-dependent Clp protease proteolytic subunit (205 aa).

Catalysis depends on Ser109, which acts as the Nucleophile. His134 is an active-site residue.

This sequence belongs to the peptidase S14 family. Fourteen ClpP subunits assemble into 2 heptameric rings which stack back to back to give a disk-like structure with a central cavity, resembling the structure of eukaryotic proteasomes.

It is found in the cytoplasm. It catalyses the reaction Hydrolysis of proteins to small peptides in the presence of ATP and magnesium. alpha-casein is the usual test substrate. In the absence of ATP, only oligopeptides shorter than five residues are hydrolyzed (such as succinyl-Leu-Tyr-|-NHMec, and Leu-Tyr-Leu-|-Tyr-Trp, in which cleavage of the -Tyr-|-Leu- and -Tyr-|-Trp bonds also occurs).. In terms of biological role, cleaves peptides in various proteins in a process that requires ATP hydrolysis. Has a chymotrypsin-like activity. Plays a major role in the degradation of misfolded proteins. This is ATP-dependent Clp protease proteolytic subunit from Baumannia cicadellinicola subsp. Homalodisca coagulata.